Reading from the N-terminus, the 313-residue chain is uncharacterized protein (313 aa).

The N-acetyltransferase domain maps to 6–152; it reads YDILENPEPN…YHASMEKMTG (147 aa).

In terms of biological role, to the C-terminal of C.elegans F21C10.9. This is an uncharacterized protein from Caenorhabditis elegans.